Here is a 222-residue protein sequence, read N- to C-terminus: MLKKTIAIIILIIGLLLIFSPFIKNGIVKYMSGHETIEQYKASDIKKNNEKDATFDFESVQLPSMTSVIKGAANYDKDAVVGSIAVPSVDVNLLVFKGTNTANLLAGATTMRSDQVMGKGNYPLAGHHMRDESMLFGPIMKVKKGDKIYLTDLENLYEYTVTETKTIDETEVSVIDNTKDARITLITCDKPTETTKRFVAVGELEKTEKLTKELENKYFPSK.

The Cytoplasmic segment spans residues 1–7 (MLKKTIA). The chain crosses the membrane as a helical span at residues 8 to 28 (IIILIIGLLLIFSPFIKNGIV). Topologically, residues 29-222 (KYMSGHETIE…ELENKYFPSK (194 aa)) are extracellular. Histidine 127 serves as the catalytic Proton donor/acceptor. Cysteine 188 serves as the catalytic Acyl-thioester intermediate.

The protein belongs to the bacterial sortase family. Class A subfamily.

The protein resides in the cell membrane. Its activity is regulated as follows. Activity is enhanced by Zn(2+) and strongly enhanced by Ca(2+). Inhibited by chalcone, a precursor of several flavonoids, which blocks the SrtA active site. Its function is as follows. Transpeptidase that anchors surface proteins to the cell wall. Recognizes and modifies its substrate by proteolytic cleavage of a C-terminal sorting signal. Following cleavage, a covalent intermediate is formed via a thioester bond between the sortase and its substrate, which is then transferred and covalently attached to the cell wall. This sortase recognizes a Leu-Pro-x-Thr-Gly (LPXTG) motif, which is cleaved by the sortase between the threonine and glycine residues. Involved in pathogenesis. May regulate the rate of synthesis and/or the stability of a subset of LPXTG proteins. Not involved in cell wall-anchoring of Hbp2 (SvpA) or Hbp1. This chain is Sortase A, found in Listeria monocytogenes serovar 1/2a (strain ATCC BAA-679 / EGD-e).